A 460-amino-acid polypeptide reads, in one-letter code: MPNDRSVKRSVTVLGAGLAGTEAAWQVACAGIPVTLVEMRPVRRSPAHHSSDFAELVCSNSFGALSSDRAAGLLQEELRRLGSLVIRTADDHAVPAGGALAVDRGRYSAALTEILDQHPLVTIERREQMDLPEVDAVTVLATGPLTSESLANDLRGFTGRDDCHFFDAASPIVHGDSIDLNLAFRASRYDKGDADYINCPMNKAEFLAFREALLEAEQAELKDFDQESAKFFEGCLPIEELARRGEDTMRYGPLKPIGLWDPRWGDVNDRDVRRAKRAYAVVQLRQEDKDGRLWNLVGFQTNLKWGEQRRVLQMIPGLAQAEFVRFGVMHRNTFLESPQLLDPTLQFRTRRHLLAAGQITGTEGYAAAVAGGWLAGTNAARLVRGLDPIALPNTTMAGALTHFVSEAPTKKFQPMPPNFGLLPDLPERIRDKRARYGAYRDRSLADLEPIRALIPEPLLA.

Position 15-20 (Gly15–Gly20) interacts with FAD.

The protein belongs to the MnmG family. TrmFO subfamily. Requires FAD as cofactor.

Its subcellular location is the cytoplasm. The catalysed reaction is uridine(54) in tRNA + (6R)-5,10-methylene-5,6,7,8-tetrahydrofolate + NADH + H(+) = 5-methyluridine(54) in tRNA + (6S)-5,6,7,8-tetrahydrofolate + NAD(+). It catalyses the reaction uridine(54) in tRNA + (6R)-5,10-methylene-5,6,7,8-tetrahydrofolate + NADPH + H(+) = 5-methyluridine(54) in tRNA + (6S)-5,6,7,8-tetrahydrofolate + NADP(+). Its function is as follows. Catalyzes the folate-dependent formation of 5-methyl-uridine at position 54 (M-5-U54) in all tRNAs. The sequence is that of Methylenetetrahydrofolate--tRNA-(uracil-5-)-methyltransferase TrmFO from Synechococcus sp. (strain CC9902).